A 218-amino-acid chain; its full sequence is 1-Cys peroxiredoxin (218 aa).

In terms of domain architecture, Thioredoxin spans 4–164 (LTIGDTIPDL…VLRVVESLQK (161 aa)). The Cysteine sulfenic acid (-SOH) intermediate role is filled by C46. The Bipartite nuclear localization signal motif lies at 194–217 (KEMFPQGFKTADLPSKKEYLRFTN).

It belongs to the peroxiredoxin family. Prx6 subfamily.

It localises to the nucleus. The protein localises to the cytoplasm. The catalysed reaction is a hydroperoxide + [thioredoxin]-dithiol = an alcohol + [thioredoxin]-disulfide + H2O. Its function is as follows. Thiol-specific peroxidase that catalyzes the reduction of hydrogen peroxide and organic hydroperoxides to water and alcohols, respectively. Seems to contribute to the inhibition of germination during stress. This is 1-Cys peroxiredoxin from Medicago truncatula (Barrel medic).